The following is a 96-amino-acid chain: Small ribosomal subunit protein bS6 (96 aa).

Belongs to the bacterial ribosomal protein bS6 family.

Binds together with bS18 to 16S ribosomal RNA. The polypeptide is Small ribosomal subunit protein bS6 (Bacillus thuringiensis subsp. konkukian (strain 97-27)).